Consider the following 372-residue polypeptide: Probable inactive receptor-like protein kinase At1g65250 (372 aa).

ATP contacts are provided by residues 1–4 and Lys-38; that span reads MGWL. Residues 1–314 form the Protein kinase domain; that stretch reads MGWLRKKKKP…QERCQMKAFL (314 aa). Phosphotyrosine is present on residues Tyr-128 and Tyr-221. The tract at residues 348 to 372 is disordered; that stretch reads SSSLSSGQTQLDSAQDISSTVVLSN. The segment covering 354 to 372 has biased composition (polar residues); that stretch reads GQTQLDSAQDISSTVVLSN.

Belongs to the protein kinase superfamily.

This chain is Probable inactive receptor-like protein kinase At1g65250, found in Arabidopsis thaliana (Mouse-ear cress).